The primary structure comprises 242 residues: uncharacterized protein (242 aa).

The region spanning 8–76 (TPLYIQLKQI…QGKGTFVKSP (69 aa)) is the HTH gntR-type domain. Residues 36–55 (ENELCTKYNVSRITVRKAIL) constitute a DNA-binding region (H-T-H motif).

This is an uncharacterized protein from Bacillus subtilis (strain 168).